Here is a 330-residue protein sequence, read N- to C-terminus: Ketol-acid reductoisomerase (NADP(+)) (330 aa).

The KARI N-terminal Rossmann domain occupies Val2–Thr182. Residues Tyr25–Gln28, Arg48, Ser51, and Asp83–Gln86 contribute to the NADP(+) site. Residue His108 is part of the active site. Gly134 lines the NADP(+) pocket. Positions Ser183–Leu328 constitute a KARI C-terminal knotted domain. The Mg(2+) site is built by Asp191, Glu195, Glu227, and Glu231. A substrate-binding site is contributed by Ser252.

It belongs to the ketol-acid reductoisomerase family. Mg(2+) serves as cofactor.

The enzyme catalyses (2R)-2,3-dihydroxy-3-methylbutanoate + NADP(+) = (2S)-2-acetolactate + NADPH + H(+). It catalyses the reaction (2R,3R)-2,3-dihydroxy-3-methylpentanoate + NADP(+) = (S)-2-ethyl-2-hydroxy-3-oxobutanoate + NADPH + H(+). It participates in amino-acid biosynthesis; L-isoleucine biosynthesis; L-isoleucine from 2-oxobutanoate: step 2/4. Its pathway is amino-acid biosynthesis; L-valine biosynthesis; L-valine from pyruvate: step 2/4. In terms of biological role, involved in the biosynthesis of branched-chain amino acids (BCAA). Catalyzes an alkyl-migration followed by a ketol-acid reduction of (S)-2-acetolactate (S2AL) to yield (R)-2,3-dihydroxy-isovalerate. In the isomerase reaction, S2AL is rearranged via a Mg-dependent methyl migration to produce 3-hydroxy-3-methyl-2-ketobutyrate (HMKB). In the reductase reaction, this 2-ketoacid undergoes a metal-dependent reduction by NADPH to yield (R)-2,3-dihydroxy-isovalerate. The sequence is that of Ketol-acid reductoisomerase (NADP(+)) from Desulforamulus reducens (strain ATCC BAA-1160 / DSM 100696 / MI-1) (Desulfotomaculum reducens).